The following is a 146-amino-acid chain: Dual specificity phosphatase Cdc25 (146 aa).

Residues 34-135 (RRPNIAIIDV…WEASGKPVCR (102 aa)) form the Rhodanese domain. 45–48 (DEER) contributes to the substrate binding site. Histidine 53 provides a ligand contact to Zn(2+). Residue 68–71 (KISH) coordinates substrate. The active-site Cysteine persulfide intermediate is cysteine 86. 90–92 (QVR) lines the substrate pocket. Positions 134, 136, and 141 each coordinate Zn(2+).

Belongs to the MPI phosphatase family. Expressed in roots and at lower levels in shoots (at protein level). Expressed in leaves, stems and flowers.

It localises to the nucleus. It catalyses the reaction O-phospho-L-tyrosyl-[protein] + H2O = L-tyrosyl-[protein] + phosphate. The catalysed reaction is [glutaredoxin]-dithiol + arsenate + glutathione + H(+) = glutathionyl-S-S-[glutaredoxin] + arsenite + H2O. Inhibited by NSC95397. Its function is as follows. Tyrosine protein phosphatase that dephosphorylates CDK complex and activate its kinase activity in vitro. Arsenate reductase that plays a major role in the reduction of arsenate to arsenite and arsenic retention in roots. Has an in vitro and in vivo arsenate reductase activity. Plays no role in arsenic metabolism. In Arabidopsis thaliana (Mouse-ear cress), this protein is Dual specificity phosphatase Cdc25.